Consider the following 259-residue polypeptide: Phosphate import ATP-binding protein PstB 1 (259 aa).

Positions I13–I254 constitute an ABC transporter domain. G45–S52 is an ATP binding site.

This sequence belongs to the ABC transporter superfamily. Phosphate importer (TC 3.A.1.7) family. In terms of assembly, the complex is composed of two ATP-binding proteins (PstB), two transmembrane proteins (PstC and PstA) and a solute-binding protein (PstS).

It localises to the cell inner membrane. It catalyses the reaction phosphate(out) + ATP + H2O = ADP + 2 phosphate(in) + H(+). Part of the ABC transporter complex PstSACB involved in phosphate import. Responsible for energy coupling to the transport system. The sequence is that of Phosphate import ATP-binding protein PstB 1 from Pseudomonas syringae pv. tomato (strain ATCC BAA-871 / DC3000).